Consider the following 4306-residue polypeptide: Cytoplasmic dynein 2 heavy chain 1 (4306 aa).

Residues 1–1650 (MAGSLGDVRK…YVQMVDSELQ (1650 aa)) are stem. 145 to 152 (LGIVLRKS) contributes to the ATP binding site. Positions 669 to 696 (KELEGYIQKLQNAAERLATENRRLRKWH) form a coiled coil. AAA regions lie at residues 1651–1875 (YTYE…VLRG), 1941–2161 (SALK…KQND), 2249–2505 (LTAD…WVLG), and 2617–2862 (HYGR…ESCK). Residues 1689-1696 (GPAGTGKT), 1979-1986 (GPSGAGKS), 2291-2298 (GPEGCGKG), and 2655-2662 (GRSGVGRR) contribute to the ATP site. The tract at residues 2880–3168 (AISSSKKKEL…AEVSKAQETI (289 aa)) is stalk. 3 coiled-coil regions span residues 2896 to 2981 (LQAG…KEVQ), 3108 to 3199 (LETE…LATL), and 3407 to 3441 (IQHE…SLLE). AAA regions lie at residues 3243-3472 (LCTE…LIQD) and 3689-3904 (MALF…VIDR).

The protein belongs to the dynein heavy chain family. As to quaternary structure, the cytoplasmic dynein complex 2 is probably composed by a heavy chain DYNC2H1 homodimer and a number of DYNC2LI1 light intermediate chains. As to expression, detected in brain, lung, spleen and kidney (at protein level). Enriched in the ependymal layer lining the lateral ventricles (at protein level).

It localises to the cytoplasm. The protein resides in the cytoskeleton. It is found in the cilium axoneme. The protein localises to the cell membrane. May function as a motor for intraflagellar retrograde transport. Functions in cilia biogenesis. According to PubMed:8666668, it may play a role in transport between endoplasmic reticulum and Golgi or organization of the Golgi in cells. This is Cytoplasmic dynein 2 heavy chain 1 (Dync2h1) from Mus musculus (Mouse).